Here is a 377-residue protein sequence, read N- to C-terminus: Rhodopsin, long-wavelength (377 aa).

Over 1-51 (MIAVSGPSYEAFSYGGQARFNNQTVVDKVPPDMLHLIDANWYQYPPLNPMW) the chain is Extracellular. Residue Asn22 is glycosylated (N-linked (GlcNAc...) asparagine). The chain crosses the membrane as a helical span at residues 52–76 (HGILGFVIGMLGFVSAMGNGMVVYI). Over 77-88 (FLSTKSLRTPSN) the chain is Cytoplasmic. The chain crosses the membrane as a helical span at residues 89 to 113 (LFVINLAISNFLMMFCMSPPMVINC). Topologically, residues 114 to 128 (YYETWVLGPLFCQIY) are extracellular. Cys125 and Cys202 are oxidised to a cystine. A helical membrane pass occupies residues 129–148 (AMLGSLFGCGSIWTMTMIAF). Over 149-167 (DRYNVIVKGLSGKPLSING) the chain is Cytoplasmic. Residues 168 to 191 (ALIRIIAIWLFSLGWTIAPMFGWN) traverse the membrane as a helical segment. The Extracellular segment spans residues 192 to 215 (RYVPEGNMTACGTDYFNRGLLSAS). Asn198 is a glycosylation site (N-linked (GlcNAc...) asparagine). Residues 216 to 243 (YLVCYGIWVYFVPLFLIIYSYWFIIQAV) traverse the membrane as a helical segment. At 244–278 (AAHEKNMREQAKKMNVASLRSSENQNTSAECKLAK) the chain is on the cytoplasmic side. A helical transmembrane segment spans residues 279 to 302 (VALMTISLWFMAWTPYLVINFSGI). At 303–309 (FNLVKIS) the chain is on the extracellular side. The chain crosses the membrane as a helical span at residues 310-334 (PLFTIWGSLFAKANAVYNPIVYGIS). Lys321 is subject to N6-(retinylidene)lysine. Residues 335–377 (HPKYRAALFAKFPSLACAAEPSSDAVSTTSGTTTVTDNEKSNA) lie on the Cytoplasmic side of the membrane. Over residues 357–370 (SDAVSTTSGTTTVT) the composition is skewed to low complexity. The interval 357–377 (SDAVSTTSGTTTVTDNEKSNA) is disordered.

Belongs to the G-protein coupled receptor 1 family. Opsin subfamily. Phosphorylated on some or all of the serine and threonine residues present in the C-terminal region.

Its subcellular location is the membrane. Visual pigments are the light-absorbing molecules that mediate vision. They consist of an apoprotein, opsin, covalently linked to 11-cis-retinal. The sequence is that of Rhodopsin, long-wavelength from Apis mellifera (Honeybee).